A 437-amino-acid chain; its full sequence is Ribulose bisphosphate carboxylase/oxygenase activase, chloroplastic (437 aa).

Residues 1–10 show a composition bias toward polar residues; the sequence is MATAVSTIGS. Residues 1-26 are disordered; that stretch reads MATAVSTIGSVNRAPPNLNGSSSSAS. Position 165 to 172 (165 to 172) interacts with ATP; it reads GGKGQGKS.

This sequence belongs to the RuBisCO activase family.

It is found in the plastid. The protein localises to the chloroplast stroma. In terms of biological role, activation of RuBisCO (ribulose-1,5-bisphosphate carboxylase/oxygenase; EC 4.1.1.39) involves the ATP-dependent carboxylation of the epsilon-amino group of lysine leading to a carbamate structure. The sequence is that of Ribulose bisphosphate carboxylase/oxygenase activase, chloroplastic (RCA) from Malus domestica (Apple).